A 245-amino-acid chain; its full sequence is Uridylate kinase (245 aa).

16–19 (KLSG) serves as a coordination point for ATP. Gly-58 contacts UMP. Residues Gly-59 and Arg-63 each coordinate ATP. Residues Asp-78 and 139-146 (TGNPFFTT) contribute to the UMP site. Residues Thr-166, Tyr-172, and Asp-175 each contribute to the ATP site.

Belongs to the UMP kinase family. In terms of assembly, homohexamer.

It is found in the cytoplasm. The catalysed reaction is UMP + ATP = UDP + ADP. The protein operates within pyrimidine metabolism; CTP biosynthesis via de novo pathway; UDP from UMP (UMPK route): step 1/1. With respect to regulation, inhibited by UTP. Catalyzes the reversible phosphorylation of UMP to UDP. The polypeptide is Uridylate kinase (Idiomarina loihiensis (strain ATCC BAA-735 / DSM 15497 / L2-TR)).